Reading from the N-terminus, the 75-residue chain is Small ribosomal subunit protein bS18 (75 aa).

This sequence belongs to the bacterial ribosomal protein bS18 family. In terms of assembly, part of the 30S ribosomal subunit. Forms a tight heterodimer with protein bS6.

Its function is as follows. Binds as a heterodimer with protein bS6 to the central domain of the 16S rRNA, where it helps stabilize the platform of the 30S subunit. The sequence is that of Small ribosomal subunit protein bS18 from Pasteurella multocida (strain Pm70).